The following is a 194-amino-acid chain: UPF0215 protein Mbar_A0619 (194 aa).

It belongs to the UPF0215 family.

This is UPF0215 protein Mbar_A0619 from Methanosarcina barkeri (strain Fusaro / DSM 804).